The following is an 84-amino-acid chain: U4-theraphotoxin-Hhn1a (84 aa).

An N-terminal signal peptide occupies residues 1–22 (MKVTLIAILTCAAVLVLHTTAA). Residues 23–47 (EELEESQLMEVGMPDTELAAVDGER) constitute a propeptide that is removed on maturation. 3 cysteine pairs are disulfide-bonded: cysteine 51/cysteine 65, cysteine 55/cysteine 76, and cysteine 70/cysteine 81.

The protein belongs to the neurotoxin 12 (Hwtx-2) family. 02 (Hwtx-2) subfamily. Expressed by the venom gland.

Its subcellular location is the secreted. Functionally, postsynaptic neurotoxin. The polypeptide is U4-theraphotoxin-Hhn1a (Cyriopagopus hainanus (Chinese bird spider)).